A 185-amino-acid chain; its full sequence is MINEIKKDTQDRMEKSLEALKGHIAKIRTGRAQPSLLDAIQVDYYGSATPLRQLANVVAEDARTLAVTVFDRSLIQAVEKAILTSDLGLNPSSAGTTIRVPLPPLTEERRRDLIKIVKGEGEQGKVAIRNVRRDANDKIKALLKDKEISENDQRKAEEEIQKITDSYIKKVDEVLAEKEKELMDF.

Belongs to the RRF family.

It is found in the cytoplasm. In terms of biological role, responsible for the release of ribosomes from messenger RNA at the termination of protein biosynthesis. May increase the efficiency of translation by recycling ribosomes from one round of translation to another. This Mannheimia succiniciproducens (strain KCTC 0769BP / MBEL55E) protein is Ribosome-recycling factor.